Consider the following 348-residue polypeptide: Phospho-N-acetylmuramoyl-pentapeptide-transferase (348 aa).

10 helical membrane-spanning segments follow: residues 11 to 31 (SWML…IFLG), 68 to 88 (AGGI…LPLG), 92 to 112 (TWLF…DDII), 128 to 148 (FVIQ…IYKG), 165 to 185 (VGHS…TIVG), 196 to 216 (LDGL…VVAL), 222 to 242 (PLAQ…FAFL), 251 to 271 (VFMG…CAVM), 276 to 296 (LLLI…ILQV), and 326 to 346 (VVAR…IAAL).

This sequence belongs to the glycosyltransferase 4 family. MraY subfamily. Mg(2+) is required as a cofactor.

It is found in the cell inner membrane. The enzyme catalyses UDP-N-acetyl-alpha-D-muramoyl-L-alanyl-gamma-D-glutamyl-meso-2,6-diaminopimeloyl-D-alanyl-D-alanine + di-trans,octa-cis-undecaprenyl phosphate = di-trans,octa-cis-undecaprenyl diphospho-N-acetyl-alpha-D-muramoyl-L-alanyl-D-glutamyl-meso-2,6-diaminopimeloyl-D-alanyl-D-alanine + UMP. Its pathway is cell wall biogenesis; peptidoglycan biosynthesis. Functionally, catalyzes the initial step of the lipid cycle reactions in the biosynthesis of the cell wall peptidoglycan: transfers peptidoglycan precursor phospho-MurNAc-pentapeptide from UDP-MurNAc-pentapeptide onto the lipid carrier undecaprenyl phosphate, yielding undecaprenyl-pyrophosphoryl-MurNAc-pentapeptide, known as lipid I. In Chlamydia caviae (strain ATCC VR-813 / DSM 19441 / 03DC25 / GPIC) (Chlamydophila caviae), this protein is Phospho-N-acetylmuramoyl-pentapeptide-transferase.